Consider the following 303-residue polypeptide: Probable cell division protein WhiA (303 aa).

A DNA-binding region (H-T-H motif) is located at residues 272–303 (SIQQLADSLSTPLTKSGVNHRLRKINKIADEL).

The protein belongs to the WhiA family.

In terms of biological role, involved in cell division and chromosome segregation. The polypeptide is Probable cell division protein WhiA (Streptococcus pneumoniae (strain ATCC 700669 / Spain 23F-1)).